The following is an 835-amino-acid chain: MSPNTGESNAAVYASSTQLARALYGGDLVSWIKHTHPGISLELQLDVPVKLIKPGMSQTRPVTVVRAPMGSGKTTALLEWLQHALKADISVLVVSCRRSFTQTLIQRFNDAGLSGFVTYLTSETYIMGFKRLIVQLESLHRVSSEAIDSYDVLILDEVMSVIGQLYSPTMRRLSAVDSLLYRLLNRCSQIIAMDATVNSQFIDLISGLRGDENIHTIVCTYAGVGFSGRTCTILRDMGIDTLVRVIKRSPEHEDVRTIHQLRGTFFDELALRLQCGHNICIFSSTLSFSELVAQFCAIFTDSILILNSTRPLCNVNEWKHFRVLVYTTVVTVGLSFDMAHFHSMFAYIKPMSYGPDMVSVYQSLGRVRLLLLNEVLMYVDGSRTRCGPLFSPMLLNFTIANKFQWFPTHTQITNKLCCAFRQRCANAFTRSNTHLFSRFKYKHLFERCSLWSLADSINILQTLLASNQILVVLDGMGPITDVSPVQFCAFIHDLRHSANAVASCMRSLRQDNDSCLTDFGPSGFMADNITAFMEKYLMESINTEEQIKVFKALACPIEQPRLVNTAILGACIRIPEALEAFDVFQKIYTHYASGWFPVLDKTGEFSIATITTAPNLTTHWELFRRCAYIAKTLKWNPSTEGCVTQVLDTDINTLFNQHGDSLAQLIFEVMRCNVTDAKIILNRPVWRTTGFLDGCHNQCFRPIPTKHEYNIALFRLIWEQLFGARVTKSTQTFPGSTRVKNLKKKDLETLLDSINVDRSACRTYRQLYNLLMSQRHSFSQQRYKITAPAWARHVYFQAHQMHLAPHAEAMLQLALSELSPGSWPRINGAVNFESL.

Residues 54 to 215 (PGMSQTRPVT…SGLRGDENIH (162 aa)) form the Helicase ATP-binding domain. Position 67-74 (67-74 (APMGSGKT)) interacts with ATP.

It belongs to the herpesviridae OriBP family. As to quaternary structure, homodimer. Interacts with the major DNA-binding protein. Interacts with the helicase/primase component 52 and the polymerase accessory protein.

The protein resides in the host nucleus. In terms of biological role, functions as a docking protein to recruit essential components of the viral replication machinery to viral DNA origins. In the presence of the major DNA-binding protein, opens dsDNA leading to a conformational change in the origin that facilitates DNA unwinding and subsequent replication. The protein is Replication origin-binding protein of Homo sapiens (Human).